The sequence spans 393 residues: NAD(P)H-quinone oxidoreductase subunit H, chloroplastic (393 aa).

Belongs to the complex I 49 kDa subunit family. NDH is composed of at least 16 different subunits, 5 of which are encoded in the nucleus.

It localises to the plastid. It is found in the chloroplast thylakoid membrane. The catalysed reaction is a plastoquinone + NADH + (n+1) H(+)(in) = a plastoquinol + NAD(+) + n H(+)(out). The enzyme catalyses a plastoquinone + NADPH + (n+1) H(+)(in) = a plastoquinol + NADP(+) + n H(+)(out). NDH shuttles electrons from NAD(P)H:plastoquinone, via FMN and iron-sulfur (Fe-S) centers, to quinones in the photosynthetic chain and possibly in a chloroplast respiratory chain. The immediate electron acceptor for the enzyme in this species is believed to be plastoquinone. Couples the redox reaction to proton translocation, and thus conserves the redox energy in a proton gradient. This is NAD(P)H-quinone oxidoreductase subunit H, chloroplastic from Oenothera argillicola (Appalachian evening primrose).